The primary structure comprises 324 residues: Delta-aminolevulinic acid dehydratase (324 aa).

Zn(2+)-binding residues include Cys118, Cys120, and Cys128. The Schiff-base intermediate with substrate role is filled by Lys195. Residues Arg205 and Arg217 each contribute to the 5-aminolevulinate site. Glu233 lines the Mg(2+) pocket. Lys248 functions as the Schiff-base intermediate with substrate in the catalytic mechanism. Residues Ser274 and Tyr313 each contribute to the 5-aminolevulinate site.

It belongs to the ALAD family. In terms of assembly, homooctamer. Requires Zn(2+) as cofactor.

It carries out the reaction 2 5-aminolevulinate = porphobilinogen + 2 H2O + H(+). It functions in the pathway porphyrin-containing compound metabolism; protoporphyrin-IX biosynthesis; coproporphyrinogen-III from 5-aminolevulinate: step 1/4. Functionally, catalyzes an early step in the biosynthesis of tetrapyrroles. Binds two molecules of 5-aminolevulinate per subunit, each at a distinct site, and catalyzes their condensation to form porphobilinogen. The polypeptide is Delta-aminolevulinic acid dehydratase (hemB) (Staphylococcus epidermidis (strain ATCC 12228 / FDA PCI 1200)).